The following is a 977-amino-acid chain: Bifunctional glutamine synthetase adenylyltransferase/adenylyl-removing enzyme (977 aa).

The interval 1–457 is adenylyl removase; sequence MRLPLPSDLP…HFRQVIADPD (457 aa). Positions 468–977 are adenylyl transferase; the sequence is GGEWSPLWEQ…RRIWGELGLS (510 aa).

The protein belongs to the GlnE family. Mg(2+) is required as a cofactor.

It catalyses the reaction [glutamine synthetase]-O(4)-(5'-adenylyl)-L-tyrosine + phosphate = [glutamine synthetase]-L-tyrosine + ADP. It carries out the reaction [glutamine synthetase]-L-tyrosine + ATP = [glutamine synthetase]-O(4)-(5'-adenylyl)-L-tyrosine + diphosphate. Functionally, involved in the regulation of glutamine synthetase GlnA, a key enzyme in the process to assimilate ammonia. When cellular nitrogen levels are high, the C-terminal adenylyl transferase (AT) inactivates GlnA by covalent transfer of an adenylyl group from ATP to specific tyrosine residue of GlnA, thus reducing its activity. Conversely, when nitrogen levels are low, the N-terminal adenylyl removase (AR) activates GlnA by removing the adenylyl group by phosphorolysis, increasing its activity. The regulatory region of GlnE binds the signal transduction protein PII (GlnB) which indicates the nitrogen status of the cell. The sequence is that of Bifunctional glutamine synthetase adenylyltransferase/adenylyl-removing enzyme from Pseudomonas putida (strain ATCC 47054 / DSM 6125 / CFBP 8728 / NCIMB 11950 / KT2440).